Reading from the N-terminus, the 350-residue chain is Guanine nucleotide-binding protein G(t) subunit alpha (350 aa).

Residues Met1–Glu21 are disordered. Gly2 carries N-myristoyl glycine lipidation. A compositionally biased stretch (basic and acidic residues) spans Ala7–Glu21. The 323-residue stretch at Arg28–Phe350 folds into the G-alpha domain. The interval Lys31–Thr44 is G1 motif. GTP contacts are provided by residues Gly36–Ser43, Leu171–Thr177, Asp196–Gln200, Asn265–Asp268, and Ala322. Residues Ser43 and Thr177 each contribute to the Mg(2+) site. The segment at Asp169–Thr177 is G2 motif. The segment at Phe192–Arg201 is G3 motif. A G4 motif region spans residues Val261–Asp268. Residues Thr320–Thr325 form a G5 motif region.

The protein belongs to the G-alpha family. G(i/o/t/z) subfamily. G proteins are composed of 3 units; alpha, beta and gamma. The alpha chain contains the guanine nucleotide binding site.

Its function is as follows. Guanine nucleotide-binding proteins (G proteins) are involved as modulators or transducers in various transmembrane signaling systems. Transducin is an amplifier and one of the transducers of a visual impulse that performs the coupling between rhodopsin and cGMP-phosphodiesterase. The polypeptide is Guanine nucleotide-binding protein G(t) subunit alpha (gnat) (Xenopus laevis (African clawed frog)).